We begin with the raw amino-acid sequence, 929 residues long: Bifunctional uridylyltransferase/uridylyl-removing enzyme (929 aa).

Residues 1-379 are uridylyltransferase; the sequence is MSPSRPAADE…RPAAKRRRVP (379 aa). The interval 380–735 is uridylyl-removing; the sequence is ESDDFVIDNN…VGFDEARAVT (356 aa). The region spanning 495–618 is the HD domain; the sequence is VDEHLIRCVG…VETVEQMKML (124 aa). ACT domains are found at residues 736-818 and 849-929; these read ELTI…AVAR and VIEV…KPAA.

Belongs to the GlnD family. Mg(2+) is required as a cofactor.

It carries out the reaction [protein-PII]-L-tyrosine + UTP = [protein-PII]-uridylyl-L-tyrosine + diphosphate. The enzyme catalyses [protein-PII]-uridylyl-L-tyrosine + H2O = [protein-PII]-L-tyrosine + UMP + H(+). With respect to regulation, uridylyltransferase (UTase) activity is inhibited by glutamine, while glutamine activates uridylyl-removing (UR) activity. Modifies, by uridylylation and deuridylylation, the PII regulatory proteins (GlnB and homologs), in response to the nitrogen status of the cell that GlnD senses through the glutamine level. Under low glutamine levels, catalyzes the conversion of the PII proteins and UTP to PII-UMP and PPi, while under higher glutamine levels, GlnD hydrolyzes PII-UMP to PII and UMP (deuridylylation). Thus, controls uridylylation state and activity of the PII proteins, and plays an important role in the regulation of nitrogen fixation and metabolism. The chain is Bifunctional uridylyltransferase/uridylyl-removing enzyme from Rhodopseudomonas palustris (strain ATCC BAA-98 / CGA009).